The primary structure comprises 237 residues: Probable transcriptional regulatory protein Bpro_2928 (237 aa).

The protein belongs to the TACO1 family.

It localises to the cytoplasm. This chain is Probable transcriptional regulatory protein Bpro_2928, found in Polaromonas sp. (strain JS666 / ATCC BAA-500).